We begin with the raw amino-acid sequence, 553 residues long: Imidazole glycerol phosphate synthase hisHF (553 aa).

The Glutamine amidotransferase type-1 domain occupies 3-223 (TVHLLDYVAG…QLHSVTLEDS (221 aa)). Active-site for GATase activity residues include Cys-81, His-194, and Glu-196. A cyclase region spans residues 232–553 (LTRRIIACLD…FLVRRFEPDV (322 aa)). Residues Asp-241 and Asp-403 contribute to the active site.

This sequence in the C-terminal section; belongs to the HisA/HisF family.

The enzyme catalyses 5-[(5-phospho-1-deoxy-D-ribulos-1-ylimino)methylamino]-1-(5-phospho-beta-D-ribosyl)imidazole-4-carboxamide + L-glutamine = D-erythro-1-(imidazol-4-yl)glycerol 3-phosphate + 5-amino-1-(5-phospho-beta-D-ribosyl)imidazole-4-carboxamide + L-glutamate + H(+). It catalyses the reaction L-glutamine + H2O = L-glutamate + NH4(+). It functions in the pathway amino-acid biosynthesis; L-histidine biosynthesis; L-histidine from 5-phospho-alpha-D-ribose 1-diphosphate: step 5/9. In terms of biological role, IGPS catalyzes the conversion of PRFAR and glutamine to IGP, AICAR and glutamate. The glutaminase domain produces the ammonia necessary for the cyclase domain to produce IGP and AICAR from PRFAR. The ammonia is channeled to the active site of the cyclase domain. This Emericella nidulans (strain FGSC A4 / ATCC 38163 / CBS 112.46 / NRRL 194 / M139) (Aspergillus nidulans) protein is Imidazole glycerol phosphate synthase hisHF (hisHF).